Reading from the N-terminus, the 110-residue chain is Ribonuclease P protein component 4 (110 aa).

Cysteine 65, cysteine 68, cysteine 94, and cysteine 97 together coordinate Zn(2+).

Belongs to the eukaryotic/archaeal RNase P protein component 4 family. As to quaternary structure, consists of a catalytic RNA component and at least 4-5 protein subunits. Zn(2+) serves as cofactor.

Its subcellular location is the cytoplasm. The catalysed reaction is Endonucleolytic cleavage of RNA, removing 5'-extranucleotides from tRNA precursor.. Its function is as follows. Part of ribonuclease P, a protein complex that generates mature tRNA molecules by cleaving their 5'-ends. The protein is Ribonuclease P protein component 4 of Methanococcus maripaludis (strain C6 / ATCC BAA-1332).